The primary structure comprises 889 residues: Valine--tRNA ligase (889 aa).

Positions 50-60 (PNVTGKLHLGH) match the 'HIGH' region motif. Residues 532–536 (KMSKS) carry the 'KMSKS' region motif. Lysine 535 serves as a coordination point for ATP. Residues 816-889 (LAELVDLDEE…QRLVDIKAEA (74 aa)) are a coiled coil.

The protein belongs to the class-I aminoacyl-tRNA synthetase family. ValS type 1 subfamily. In terms of assembly, monomer.

It localises to the cytoplasm. It catalyses the reaction tRNA(Val) + L-valine + ATP = L-valyl-tRNA(Val) + AMP + diphosphate. In terms of biological role, catalyzes the attachment of valine to tRNA(Val). As ValRS can inadvertently accommodate and process structurally similar amino acids such as threonine, to avoid such errors, it has a 'posttransfer' editing activity that hydrolyzes mischarged Thr-tRNA(Val) in a tRNA-dependent manner. The polypeptide is Valine--tRNA ligase (Lactiplantibacillus plantarum (strain ATCC BAA-793 / NCIMB 8826 / WCFS1) (Lactobacillus plantarum)).